The sequence spans 302 residues: Ribonuclease HII (302 aa).

An RNase H type-2 domain is found at 53–297 (EFEIGVDEVG…VQQAIEGTLA (245 aa)). 3 residues coordinate a divalent metal cation: aspartate 59, glutamate 60, and aspartate 163.

The protein belongs to the RNase HII family. Mn(2+) is required as a cofactor. Mg(2+) serves as cofactor.

The protein localises to the cytoplasm. It catalyses the reaction Endonucleolytic cleavage to 5'-phosphomonoester.. Its function is as follows. Endonuclease that specifically degrades the RNA of RNA-DNA hybrids. The chain is Ribonuclease HII from Psychrobacter sp. (strain PRwf-1).